We begin with the raw amino-acid sequence, 377 residues long: Homoserine O-succinyltransferase (377 aa).

The AB hydrolase-1 domain maps to 45-356; sequence NAVLVCHALN…PHGHDAFLLD (312 aa). Ser151 serves as the catalytic Nucleophile. Arg221 lines the substrate pocket. Residues Asp317 and His350 contribute to the active site. Substrate is bound at residue Asp351.

This sequence belongs to the AB hydrolase superfamily. MetX family. As to quaternary structure, homodimer.

The protein resides in the cytoplasm. It carries out the reaction L-homoserine + succinyl-CoA = O-succinyl-L-homoserine + CoA. It participates in amino-acid biosynthesis; L-methionine biosynthesis via de novo pathway; O-succinyl-L-homoserine from L-homoserine: step 1/1. Functionally, transfers a succinyl group from succinyl-CoA to L-homoserine, forming succinyl-L-homoserine. In Leptothrix cholodnii (strain ATCC 51168 / LMG 8142 / SP-6) (Leptothrix discophora (strain SP-6)), this protein is Homoserine O-succinyltransferase.